We begin with the raw amino-acid sequence, 101 residues long: Precursor of CEP6 (101 aa).

The first 26 residues, 1 to 26 (MKLSVYIILSILFISTVFYEIQFTEA), serve as a signal peptide directing secretion. The propeptide occupies 27-48 (RQLRKTDDQDHDDHHFTVGYTD). A compositionally biased stretch (basic and acidic residues) spans 29 to 42 (LRKTDDQDHDDHHF). Residues 29-101 (LRKTDDQDHD…HAVKNNEPNA (73 aa)) are disordered. Hydroxyproline occurs at positions 52, 55, and 59. The propeptide occupies 64–77 (KMKENEENAGGYKD). Residues 64–79 (KMKENEENAGGYKDDF) are compositionally biased toward basic and acidic residues. 3 positions are modified to hydroxyproline: Pro81, Pro84, and Pro88. The propeptide occupies 93-101 (AVKNNEPNA).

It belongs to the C-terminally encoded plant signaling peptide (CEP) family. As to quaternary structure, interacts with CEP receptors (e.g. CEPR1 and CEPR2). Post-translationally, the mature small signaling peptide is generated by proteolytic processing of the longer precursor. Expressed in lateral root primordia and in lateral roots excluding the meristem region. Also present in the aerial tissues, such as leaf petioles and the shoot apex region.

The protein resides in the secreted. It is found in the extracellular space. The protein localises to the apoplast. Its function is as follows. Extracellular signaling peptide that represses primary root growth rate. Modulates leaf morphology. Regulates systemic nitrogen (N)-demand signaling. Mediates up-regulation of genes involved in N uptake and assimilation pathways. The polypeptide is Precursor of CEP6 (Arabidopsis thaliana (Mouse-ear cress)).